A 150-amino-acid polypeptide reads, in one-letter code: 3-dehydroquinate dehydratase (150 aa).

Catalysis depends on tyrosine 23, which acts as the Proton acceptor. Positions 75, 81, and 88 each coordinate substrate. The active-site Proton donor is histidine 101. Residues 102-103 (LS) and arginine 112 each bind substrate.

The protein belongs to the type-II 3-dehydroquinase family. In terms of assembly, homododecamer.

The catalysed reaction is 3-dehydroquinate = 3-dehydroshikimate + H2O. It functions in the pathway metabolic intermediate biosynthesis; chorismate biosynthesis; chorismate from D-erythrose 4-phosphate and phosphoenolpyruvate: step 3/7. Functionally, catalyzes a trans-dehydration via an enolate intermediate. The polypeptide is 3-dehydroquinate dehydratase (Pseudomonas savastanoi pv. phaseolicola (strain 1448A / Race 6) (Pseudomonas syringae pv. phaseolicola (strain 1448A / Race 6))).